A 325-amino-acid polypeptide reads, in one-letter code: Lipoyl synthase (325 aa).

[4Fe-4S] cluster-binding residues include cysteine 66, cysteine 71, cysteine 77, cysteine 92, cysteine 96, cysteine 99, and serine 303. Positions 78–292 (WEDREATFLI…AQFAEGLGFA (215 aa)) constitute a Radical SAM core domain.

Belongs to the radical SAM superfamily. Lipoyl synthase family. It depends on [4Fe-4S] cluster as a cofactor.

The protein resides in the cytoplasm. It carries out the reaction [[Fe-S] cluster scaffold protein carrying a second [4Fe-4S](2+) cluster] + N(6)-octanoyl-L-lysyl-[protein] + 2 oxidized [2Fe-2S]-[ferredoxin] + 2 S-adenosyl-L-methionine + 4 H(+) = [[Fe-S] cluster scaffold protein] + N(6)-[(R)-dihydrolipoyl]-L-lysyl-[protein] + 4 Fe(3+) + 2 hydrogen sulfide + 2 5'-deoxyadenosine + 2 L-methionine + 2 reduced [2Fe-2S]-[ferredoxin]. It functions in the pathway protein modification; protein lipoylation via endogenous pathway; protein N(6)-(lipoyl)lysine from octanoyl-[acyl-carrier-protein]: step 2/2. In terms of biological role, catalyzes the radical-mediated insertion of two sulfur atoms into the C-6 and C-8 positions of the octanoyl moiety bound to the lipoyl domains of lipoate-dependent enzymes, thereby converting the octanoylated domains into lipoylated derivatives. The polypeptide is Lipoyl synthase (Mycobacterium sp. (strain JLS)).